Reading from the N-terminus, the 306-residue chain is Homeobox protein CUP9 (306 aa).

Residues 75–123 form a disordered region; it reads PAINSGGTSTTATPTASTVETSKTSSSAMDTQSQYGSSKKSKSASDDAK. Residues 79–96 show a composition bias toward low complexity; that stretch reads SGGTSTTATPTASTVETS. The span at 97–110 shows a compositional bias: polar residues; that stretch reads KTSSSAMDTQSQYG. Positions 162 to 224 form a DNA-binding region, homeobox; TALE-type; sequence NSGRRSNLPK…NVRRRKIFSD (63 aa).

It belongs to the TALE/CUP9 homeobox family.

Its subcellular location is the nucleus. In terms of biological role, probable DNA-binding protein which plays a role in protecting yeast cells against copper toxicity. May regulate the expression of important copper homeostatic genes. In Saccharomyces cerevisiae (strain ATCC 204508 / S288c) (Baker's yeast), this protein is Homeobox protein CUP9 (CUP9).